A 368-amino-acid polypeptide reads, in one-letter code: 3-dehydroquinate synthase (368 aa).

NAD(+)-binding positions include 69 to 74 (DGEAYK), 103 to 107 (GVIGD), 127 to 128 (TT), lysine 140, and lysine 149. Residues glutamate 182, histidine 245, and histidine 262 each contribute to the Zn(2+) site.

Belongs to the sugar phosphate cyclases superfamily. Dehydroquinate synthase family. The cofactor is Co(2+). Requires Zn(2+) as cofactor. NAD(+) serves as cofactor.

It is found in the cytoplasm. The enzyme catalyses 7-phospho-2-dehydro-3-deoxy-D-arabino-heptonate = 3-dehydroquinate + phosphate. It functions in the pathway metabolic intermediate biosynthesis; chorismate biosynthesis; chorismate from D-erythrose 4-phosphate and phosphoenolpyruvate: step 2/7. Functionally, catalyzes the conversion of 3-deoxy-D-arabino-heptulosonate 7-phosphate (DAHP) to dehydroquinate (DHQ). This chain is 3-dehydroquinate synthase, found in Pseudomonas aeruginosa (strain UCBPP-PA14).